The primary structure comprises 331 residues: MDTEMDGVNNDGYTSLYKETAKGNIKKVVELLYKGVNPNTPNVDSYTPLHIAAKTGNIKIIRRLIRYGANVDKETNDGYTALLIAICTGDIKTCNVLLDEGANPNYVNKYGITPLVRIISYYRPTILKLLMDRGANCNQIINIGQVTYTIMEYFINLFDEYKIPILNLVPYIIISKFKASITVNIEGFNRNIAAIAKNSRLLEVALKCKSEIAFMTTRGIGDKSLFEICILEDIKDIDHNSFVAFLDKLIESQSNLRIYGYTMNKIIEMGRYRKELLCSAVRVNSCNLSSLNTEWCLLPLKGKLNILSKLNNDNIKKLILNDAIKVNNKTG.

ANK repeat units lie at residues 11–40, 44–73, 77–106, and 110–139; these read DGYT…NPNT, DSYT…NVDK, DGYT…NPNY, and YGIT…NCNQ.

The chain is Putative ankyrin repeat protein FPV012 from Vertebrata (FPV).